The chain runs to 169 residues: Peptide deformylase (169 aa).

Fe cation contacts are provided by Cys91 and His133. Glu134 is an active-site residue. His137 provides a ligand contact to Fe cation.

The protein belongs to the polypeptide deformylase family. It depends on Fe(2+) as a cofactor.

It catalyses the reaction N-terminal N-formyl-L-methionyl-[peptide] + H2O = N-terminal L-methionyl-[peptide] + formate. Functionally, removes the formyl group from the N-terminal Met of newly synthesized proteins. Requires at least a dipeptide for an efficient rate of reaction. N-terminal L-methionine is a prerequisite for activity but the enzyme has broad specificity at other positions. This is Peptide deformylase from Shigella boydii serotype 18 (strain CDC 3083-94 / BS512).